The following is a 529-amino-acid chain: Beta-galactoside alpha-2,6-sialyltransferase 2 (529 aa).

The Cytoplasmic segment spans residues 1-11; it reads MKPHLKQWRQR. The chain crosses the membrane as a helical; Signal-anchor for type II membrane protein span at residues 12 to 32; it reads MLFGIFAWGLLFLLIFIYFTD. The Lumenal segment spans residues 33–529; that stretch reads SNPAEPVPSS…PAPSPVIPHS (497 aa). S69 carries O-linked (GalNAc...) serine glycosylation. Residue N211 is glycosylated (N-linked (GlcNAc...) asparagine). Disulfide bonds link C253–C519, C296–C448, and C466–C477.

It belongs to the glycosyltransferase 29 family. O-glycosylated. As to expression, weakly expressed in some tissues, such as small intestine, colon and fetal brain.

It localises to the golgi apparatus. Its subcellular location is the golgi stack membrane. The catalysed reaction is a beta-D-galactoside + CMP-N-acetyl-beta-neuraminate = an N-acetyl-alpha-neuraminyl-(2-&gt;6)-beta-D-galactosyl derivative + CMP + H(+). Transfers sialic acid from the donor of substrate CMP-sialic acid to galactose containing acceptor substrates. Has alpha-2,6-sialyltransferase activity toward oligosaccharides that have the Gal-beta-1,4-GlcNAc sequence at the non-reducing end of their carbohydrate groups, but it has weak or no activities toward glycoproteins and glycolipids. This chain is Beta-galactoside alpha-2,6-sialyltransferase 2 (ST6GAL2), found in Homo sapiens (Human).